Consider the following 157-residue polypeptide: 2-C-methyl-D-erythritol 2,4-cyclodiphosphate synthase (157 aa).

2 residues coordinate a divalent metal cation: aspartate 9 and histidine 11. 4-CDP-2-C-methyl-D-erythritol 2-phosphate contacts are provided by residues 9–11 (DVH) and 35–36 (HS). Position 43 (histidine 43) interacts with a divalent metal cation. 4-CDP-2-C-methyl-D-erythritol 2-phosphate is bound by residues 57–59 (DIG), phenylalanine 140, and arginine 143.

Belongs to the IspF family. As to quaternary structure, homotrimer. A divalent metal cation serves as cofactor.

The catalysed reaction is 4-CDP-2-C-methyl-D-erythritol 2-phosphate = 2-C-methyl-D-erythritol 2,4-cyclic diphosphate + CMP. It functions in the pathway isoprenoid biosynthesis; isopentenyl diphosphate biosynthesis via DXP pathway; isopentenyl diphosphate from 1-deoxy-D-xylulose 5-phosphate: step 4/6. Its function is as follows. Involved in the biosynthesis of isopentenyl diphosphate (IPP) and dimethylallyl diphosphate (DMAPP), two major building blocks of isoprenoid compounds. Catalyzes the conversion of 4-diphosphocytidyl-2-C-methyl-D-erythritol 2-phosphate (CDP-ME2P) to 2-C-methyl-D-erythritol 2,4-cyclodiphosphate (ME-CPP) with a corresponding release of cytidine 5-monophosphate (CMP). This chain is 2-C-methyl-D-erythritol 2,4-cyclodiphosphate synthase, found in Caldicellulosiruptor bescii (strain ATCC BAA-1888 / DSM 6725 / KCTC 15123 / Z-1320) (Anaerocellum thermophilum).